Reading from the N-terminus, the 225-residue chain is Heptaprenylglyceryl phosphate synthase (225 aa).

Lysine 6 lines the sn-glycerol 1-phosphate pocket. 2 residues coordinate Mg(2+): aspartate 8 and threonine 34. Sn-glycerol 1-phosphate contacts are provided by residues 153–158 (YVEYSG), glycine 183, and 203–204 (GN).

Belongs to the GGGP/HepGP synthase family. Group I subfamily. In terms of assembly, homodimer. The cofactor is Mg(2+).

It carries out the reaction sn-glycerol 1-phosphate + all-trans-heptaprenyl diphosphate = 3-heptaprenyl-sn-glycero-1-phosphate + diphosphate. It functions in the pathway membrane lipid metabolism; glycerophospholipid metabolism. Its function is as follows. Prenyltransferase that catalyzes in vivo the transfer of the heptaprenyl moiety of heptaprenyl pyrophosphate (HepPP; 35 carbon atoms) to the C3 hydroxyl of sn-glycerol-1-phosphate (G1P), producing heptaprenylglyceryl phosphate (HepGP). This reaction is an ether-bond-formation step in the biosynthesis of archaea-type G1P-based membrane lipids found in Bacillales. This is Heptaprenylglyceryl phosphate synthase from Listeria monocytogenes serotype 4b (strain CLIP80459).